The chain runs to 459 residues: DIMBOA UDP-glucosyltransferase BX8 (459 aa).

Residue histidine 19 is the Proton acceptor of the active site. Histidine 19 provides a ligand contact to an anthocyanidin. Aspartate 119 serves as the catalytic Charge relay. The UDP-alpha-D-glucose site is built by threonine 141, alanine 340, glutamine 342, histidine 357, tryptophan 360, asparagine 361, serine 362, and glutamate 365. Glycine 380 serves as a coordination point for an anthocyanidin. Residues aspartate 381 and glutamine 382 each contribute to the UDP-alpha-D-glucose site.

The protein belongs to the UDP-glycosyltransferase family. Requires Mg(2+) as cofactor. Ca(2+) is required as a cofactor. Expressed at the same levels in roots and shoots.

It catalyses the reaction DIMBOA + UDP-alpha-D-glucose = DIMBOA beta-D-glucoside + UDP + H(+). It carries out the reaction DIBOA + UDP-alpha-D-glucose = DIBOA beta-D-glucoside + UDP + H(+). Its function is as follows. Glucosyltransferase involved in the last step of benzoxazinoid glucoside biosynthesis. Catalyzes the glucosylation of hydroxamic acids utilizing UDP-glucose as glucose doner, reducing the toxicity of these natural insecticides for storage. Can use DIMBOA and DIBOA as substrates, HMBOA (2-hydroxy-7-methoxy-2H-1,4-benzoxazin-3(4H)-one) and HBOA (2-hydroxy-2H-1,4-benzoxazin-3(4H)-one) with a lower efficiency, but not indole acetic acid or quercitin. The protein is DIMBOA UDP-glucosyltransferase BX8 (Bx8) of Zea mays (Maize).